Reading from the N-terminus, the 653-residue chain is Laccase ustL (653 aa).

A signal peptide spans 1–20 (MTSLTGLALLLCVLASQSWA). Plastocyanin-like domains follow at residues 31–143 (WEKG…RPKR) and 173–362 (VLSD…ATQV). N-linked (GlcNAc...) asparagine glycans are attached at residues Asn74, Asn220, Asn235, Asn255, Asn277, Asn405, Asn463, and Asn479. The Plastocyanin-like 3 domain maps to 463–594 (NQTVGTEDEK…GGMSIALLDG (132 aa)). Cu cation contacts are provided by His501, His504, His506, His576, Cys577, His578, and His582. An N-linked (GlcNAc...) asparagine glycan is attached at Asn623.

Belongs to the multicopper oxidase family.

It carries out the reaction 4 norrubrofusarin + O2 = 2 ustilaginoidin A + 2 H2O. It participates in secondary metabolite biosynthesis. In terms of biological role, laccase; part of the gene cluster that mediates the biosynthesis of ustilaginoidins, dimeric gamma-naphthopyrones isolated from different fungal species. The first step in the biosynthesis of ustilaginoidins is the production of gamma-naphthopyrone precursor YWA1 by the non-reducing polyketide synthase ustP, via condensation of one acetyl-CoA starter unit with 6 malonyl-CoA units. YWA1 is then probably substrate of the ustZ to yield norrubrofusarin via a dehydration reaction. A key enzyme in the biosynthetic pathway is the laccase ustL, which catalyzes the oxidative dimerization of norrubrofusarin to ustilaginoidin A. It can produce the M- and P-atropisomers in varying amounts, depending on the reaction conditions. For the biosynthesis of 3-methylustilaginoid in derivatives such as chaetochromin A, a methylated derivative of YWA1 is required. The C-methylation is considered to be catalyzed by ustM, the phosphopantetheine attachment site of which indicates that it acts on the growing polyketide chain before release of the product. For the biosynthesis of chaetochromin A, it is assumed that saturation of the D2 double bond takes place before dimerization, and is probably catalyzed by an external reductase because no candidate gene was identified within the cluster. The chain is Laccase ustL from Ustilaginoidea virens (Rice false smut fungus).